We begin with the raw amino-acid sequence, 459 residues long: Interleukin-7 receptor subunit alpha (459 aa).

The N-terminal stretch at 1 to 20 is a signal peptide; the sequence is MTILGTTFGMVFSLLQVVSG. Over 21–239 the chain is Extracellular; sequence ESGYAQNGDL…EINNSSGEMD (219 aa). A disulfide bridge links C42 with C57. 2 N-linked (GlcNAc...) asparagine glycosylation sites follow: N49 and N65. 2 disulfides stabilise this stretch: C74/C82 and C108/C118. The 101-residue stretch at 131 to 231 folds into the Fibronectin type-III domain; the sequence is APFDLSVVYR…PSYYFRTPEI (101 aa). N-linked (GlcNAc...) asparagine glycosylation is found at N151 and N182. Positions 217 to 221 match the WSXWS motif motif; that stretch reads WSEWS. N-linked (GlcNAc...) asparagine glycans are attached at residues N232 and N233. A helical transmembrane segment spans residues 240–264; the sequence is PILLTISILSFFSVALLVILACVLW. Residues 265-459 lie on the Cytoplasmic side of the membrane; the sequence is KKRIKPIVWP…VTMSSFYQNQ (195 aa). Residues 272 to 280 carry the Box 1 motif motif; sequence VWPSLPDHK. Residue T282 is modified to Phosphothreonine; by PKC.

Belongs to the type I cytokine receptor family. Type 4 subfamily. As to quaternary structure, the IL7 receptor is a heterodimer of IL7R and IL2RG. The TSLP receptor is a heterodimer of CRLF2 and IL7R. Interacts with CD53. In terms of processing, N-glycosylated IL-7Ralpha binds IL7 300-fold more tightly than the unglycosylated form. Ubiquitinated by MARCHF8; leading to lysosomal degradation.

It is found in the cell membrane. Its subcellular location is the secreted. In terms of biological role, receptor for interleukin-7. Also acts as a receptor for thymic stromal lymphopoietin (TSLP). The chain is Interleukin-7 receptor subunit alpha (IL7R) from Homo sapiens (Human).